A 364-amino-acid chain; its full sequence is tRNA 2-selenouridine synthase (364 aa).

The Rhodanese domain maps to 14–137; that stretch reads LLADTPLIDV…LRQTAIQATW (124 aa). C97 acts as the S-selanylcysteine intermediate in catalysis.

The protein belongs to the SelU family. As to quaternary structure, monomer.

It catalyses the reaction 5-methylaminomethyl-2-thiouridine(34) in tRNA + selenophosphate + (2E)-geranyl diphosphate + H2O + H(+) = 5-methylaminomethyl-2-selenouridine(34) in tRNA + (2E)-thiogeraniol + phosphate + diphosphate. The enzyme catalyses 5-methylaminomethyl-2-thiouridine(34) in tRNA + (2E)-geranyl diphosphate = 5-methylaminomethyl-S-(2E)-geranyl-thiouridine(34) in tRNA + diphosphate. The catalysed reaction is 5-methylaminomethyl-S-(2E)-geranyl-thiouridine(34) in tRNA + selenophosphate + H(+) = 5-methylaminomethyl-2-(Se-phospho)selenouridine(34) in tRNA + (2E)-thiogeraniol. It carries out the reaction 5-methylaminomethyl-2-(Se-phospho)selenouridine(34) in tRNA + H2O = 5-methylaminomethyl-2-selenouridine(34) in tRNA + phosphate. Involved in the post-transcriptional modification of the uridine at the wobble position (U34) of tRNA(Lys), tRNA(Glu) and tRNA(Gln). Catalyzes the conversion of 2-thiouridine (S2U-RNA) to 2-selenouridine (Se2U-RNA). Acts in a two-step process involving geranylation of 2-thiouridine (S2U) to S-geranyl-2-thiouridine (geS2U) and subsequent selenation of the latter derivative to 2-selenouridine (Se2U) in the tRNA chain. The sequence is that of tRNA 2-selenouridine synthase from Salmonella paratyphi B (strain ATCC BAA-1250 / SPB7).